A 183-amino-acid chain; its full sequence is Glutathione-regulated potassium-efflux system ancillary protein KefG (183 aa).

This sequence belongs to the NAD(P)H dehydrogenase (quinone) family. KefG subfamily. In terms of assembly, interacts with KefB.

Its subcellular location is the cell inner membrane. It carries out the reaction a quinone + NADH + H(+) = a quinol + NAD(+). The enzyme catalyses a quinone + NADPH + H(+) = a quinol + NADP(+). In terms of biological role, regulatory subunit of a potassium efflux system that confers protection against electrophiles. Required for full activity of KefB. The sequence is that of Glutathione-regulated potassium-efflux system ancillary protein KefG from Enterobacter sp. (strain 638).